The sequence spans 176 residues: Ubiquinol-cytochrome c reductase iron-sulfur subunit (176 aa).

Residues 15–36 traverse the membrane as a helical segment; the sequence is FLFVATGAAAAVGGAAALWPFI. Residues 87 to 174 form the Rieske domain; the sequence is ARAVNVASLP…YQFVSDTKIQ (88 aa). Positions 119, 121, 138, and 141 each coordinate [2Fe-2S] cluster. Cys-124 and Cys-140 form a disulfide bridge.

Belongs to the Rieske iron-sulfur protein family. In terms of assembly, the main subunits of complex b-c1 are: cytochrome b, cytochrome c1 and the Rieske protein. The cofactor is [2Fe-2S] cluster.

The protein resides in the cell membrane. The enzyme catalyses a quinol + 2 Fe(III)-[cytochrome c](out) = a quinone + 2 Fe(II)-[cytochrome c](out) + 2 H(+)(out). In terms of biological role, component of the ubiquinol-cytochrome c reductase complex (complex III or cytochrome b-c1 complex), which is a respiratory chain that generates an electrochemical potential coupled to ATP synthesis. In Bradyrhizobium diazoefficiens (strain JCM 10833 / BCRC 13528 / IAM 13628 / NBRC 14792 / USDA 110), this protein is Ubiquinol-cytochrome c reductase iron-sulfur subunit (petA).